Here is a 234-residue protein sequence, read N- to C-terminus: Large ribosomal subunit protein uL1 (234 aa).

The protein belongs to the universal ribosomal protein uL1 family. Part of the 50S ribosomal subunit.

Its function is as follows. Binds directly to 23S rRNA. The L1 stalk is quite mobile in the ribosome, and is involved in E site tRNA release. Functionally, protein L1 is also a translational repressor protein, it controls the translation of the L11 operon by binding to its mRNA. The protein is Large ribosomal subunit protein uL1 of Desulfatibacillum aliphaticivorans.